Reading from the N-terminus, the 299-residue chain is Tyrosine recombinase XerC (299 aa).

The region spanning 1-81 (MDEAIRRFIE…SWRQFYHWLQ (81 aa)) is the Core-binding (CB) domain. A Tyr recombinase domain is found at 102-281 (LLPKALPVDG…DFQHLAKVYD (180 aa)). Active-site residues include R142, K166, H233, R236, and H259. Y268 (O-(3'-phospho-DNA)-tyrosine intermediate) is an active-site residue.

This sequence belongs to the 'phage' integrase family. XerC subfamily. As to quaternary structure, forms a cyclic heterotetrameric complex composed of two molecules of XerC and two molecules of XerD.

The protein localises to the cytoplasm. Its function is as follows. Site-specific tyrosine recombinase, which acts by catalyzing the cutting and rejoining of the recombining DNA molecules. The XerC-XerD complex is essential to convert dimers of the bacterial chromosome into monomers to permit their segregation at cell division. It also contributes to the segregational stability of plasmids. This Chromobacterium violaceum (strain ATCC 12472 / DSM 30191 / JCM 1249 / CCUG 213 / NBRC 12614 / NCIMB 9131 / NCTC 9757 / MK) protein is Tyrosine recombinase XerC.